A 143-amino-acid polypeptide reads, in one-letter code: EKC/KEOPS complex subunit LAGE3 (143 aa).

The tract at residues 1–57 (MRDADADAGGGADGGDGRGGHSCRGGVDTAAAPAGGAPPAHAPGPGRDAASAARGSR) is disordered. Over residues 30 to 55 (AAAPAGGAPPAHAPGPGRDAASAARG) the composition is skewed to low complexity.

It belongs to the CTAG/PCC1 family. Component of the EKC/KEOPS complex composed of at least GON7, TP53RK, TPRKB, OSGEP and LAGE3; the whole complex dimerizes. Ubiquitous.

Its subcellular location is the cytoplasm. The protein resides in the nucleus. Functionally, component of the EKC/KEOPS complex that is required for the formation of a threonylcarbamoyl group on adenosine at position 37 (t(6)A37) in tRNAs that read codons beginning with adenine. The complex is probably involved in the transfer of the threonylcarbamoyl moiety of threonylcarbamoyl-AMP (TC-AMP) to the N6 group of A37. LAGE3 functions as a dimerization module for the complex. The chain is EKC/KEOPS complex subunit LAGE3 from Homo sapiens (Human).